A 515-amino-acid polypeptide reads, in one-letter code: MTATPKPLVLIILDGFGHSESPDYNAIYAAKKPVWDRLLATQPHGLISGSGMDVGLPDGQMGNSEVGHMNLGAGRVVYQDFTRVTKAIRDGEFFDNPVIASAVDKAVAADKAVHILGLLSPGGVHSHEDHLVAMAQMAARRGAGKIYLHAFLDGRDTPPKSAQPSLERLDATFAGLGKGRIASIIGRYFAMDRDNRWDRVQAAYELIVDGKAEFTADSSVAALEAAYARGESDEFVKATAVVPAGAEAVRVEDGDAVIFMNFRADRARELSRAFVEPAFGEFPRQRAAQLAGFVMLTQYAASIPAPCAFPPEPLTNVLGEYLAKHGKTQLRIAETEKYAHVTFFFSGGREEPYEGEERILIPSPKVATYDLQPEMSAPEVTDRIVEAIEQQRYDVIVVNYANGDMVGHTGVFEAAVKAVECLDTCMGRIVEALDKVGGEALITADHGNVEQMEDESTGQAHTAHTCEPVPFVYVGKRKLSIREGGVLADVAPTMLTLMGLEQPAEMTGRSIVILD.

Residues Asp-14 and Ser-64 each contribute to the Mn(2+) site. The active-site Phosphoserine intermediate is Ser-64. Residues His-125, 155–156 (RD), Arg-187, Arg-193, 263–266 (RADR), and Lys-337 contribute to the substrate site. Positions 404, 408, 445, 446, and 464 each coordinate Mn(2+).

Belongs to the BPG-independent phosphoglycerate mutase family. In terms of assembly, monomer. It depends on Mn(2+) as a cofactor.

It carries out the reaction (2R)-2-phosphoglycerate = (2R)-3-phosphoglycerate. The protein operates within carbohydrate degradation; glycolysis; pyruvate from D-glyceraldehyde 3-phosphate: step 3/5. Functionally, catalyzes the interconversion of 2-phosphoglycerate and 3-phosphoglycerate. The chain is 2,3-bisphosphoglycerate-independent phosphoglycerate mutase from Pseudomonas paraeruginosa (strain DSM 24068 / PA7) (Pseudomonas aeruginosa (strain PA7)).